The primary structure comprises 437 residues: Phosphoribosylamine--glycine ligase (437 aa).

The region spanning 109–316 (KDFLARHGIP…LLDLIEAALN (208 aa)) is the ATP-grasp domain. Residue 135–196 (VRQQGAPIVI…EEYLDGEEAS (62 aa)) participates in ATP binding. Mg(2+)-binding residues include E286 and N288.

Belongs to the GARS family. Requires Mg(2+) as cofactor. Mn(2+) serves as cofactor.

The catalysed reaction is 5-phospho-beta-D-ribosylamine + glycine + ATP = N(1)-(5-phospho-beta-D-ribosyl)glycinamide + ADP + phosphate + H(+). Its pathway is purine metabolism; IMP biosynthesis via de novo pathway; N(1)-(5-phospho-D-ribosyl)glycinamide from 5-phospho-alpha-D-ribose 1-diphosphate: step 2/2. The chain is Phosphoribosylamine--glycine ligase from Xylella fastidiosa (strain 9a5c).